A 448-amino-acid chain; its full sequence is Ribulose bisphosphate carboxylase large chain (448 aa).

Residues methionine 1 to serine 2 constitute a propeptide that is removed on maturation. Proline 3 bears the N-acetylproline mark. An N6,N6,N6-trimethyllysine modification is found at lysine 14. Substrate is bound by residues asparagine 122 and threonine 172. Lysine 174 serves as the catalytic Proton acceptor. Residue lysine 176 coordinates substrate. Mg(2+) contacts are provided by lysine 200, aspartate 202, and glutamate 203. Lysine 200 carries the post-translational modification N6-carboxylysine. Catalysis depends on histidine 293, which acts as the Proton acceptor. 3 residues coordinate substrate: arginine 294, histidine 326, and serine 378.

Belongs to the RuBisCO large chain family. Type I subfamily. Heterohexadecamer of 8 large chains and 8 small chains; disulfide-linked. The disulfide link is formed within the large subunit homodimers. Requires Mg(2+) as cofactor. Post-translationally, the disulfide bond which can form in the large chain dimeric partners within the hexadecamer appears to be associated with oxidative stress and protein turnover.

It localises to the plastid. The protein resides in the chloroplast. It carries out the reaction 2 (2R)-3-phosphoglycerate + 2 H(+) = D-ribulose 1,5-bisphosphate + CO2 + H2O. It catalyses the reaction D-ribulose 1,5-bisphosphate + O2 = 2-phosphoglycolate + (2R)-3-phosphoglycerate + 2 H(+). Its function is as follows. RuBisCO catalyzes two reactions: the carboxylation of D-ribulose 1,5-bisphosphate, the primary event in carbon dioxide fixation, as well as the oxidative fragmentation of the pentose substrate in the photorespiration process. Both reactions occur simultaneously and in competition at the same active site. This Dichapetalum crassifolium protein is Ribulose bisphosphate carboxylase large chain.